Reading from the N-terminus, the 264-residue chain is MNDTPHVKLHGFNNLTKSLSFNMYDICYTKTPKEREAYISYIDDVYNAERLTNILKHVADIIGAHVLNIAKQDYVPQGASVTMLVSEGPVVEVPQAEAPLPEAVVLSLDKSHITVHTYPEYHPSDGISTFRADIDVVTCGEISPLKALDYLIQSFEADIMIIDYRVRGFTRDIHGYKLFIDHDITSIQNYIPEDIREKYDMIDVNIYQENIFHTKCKLRQFDLDNYLFGHTKDALSKQEVEETTAKLKREMDEIFYGKNMPSGF.

The active-site Schiff-base intermediate with substrate; via pyruvic acid is Ser111. Position 111 is a pyruvic acid (Ser); by autocatalysis (Ser111). The Proton acceptor; for processing activity role is filled by His116. The Proton donor; for catalytic activity role is filled by Cys139.

The protein belongs to the prokaryotic AdoMetDC family. Type 2 subfamily. As to quaternary structure, heterooctamer of four alpha and four beta chains arranged as a tetramer of alpha/beta heterodimers. It depends on pyruvate as a cofactor. Is synthesized initially as an inactive proenzyme. Formation of the active enzyme involves a self-maturation process in which the active site pyruvoyl group is generated from an internal serine residue via an autocatalytic post-translational modification. Two non-identical subunits are generated from the proenzyme in this reaction, and the pyruvate is formed at the N-terminus of the alpha chain, which is derived from the carboxyl end of the proenzyme. The post-translation cleavage follows an unusual pathway, termed non-hydrolytic serinolysis, in which the side chain hydroxyl group of the serine supplies its oxygen atom to form the C-terminus of the beta chain, while the remainder of the serine residue undergoes an oxidative deamination to produce ammonia and the pyruvoyl group blocking the N-terminus of the alpha chain.

It catalyses the reaction S-adenosyl-L-methionine + H(+) = S-adenosyl 3-(methylsulfanyl)propylamine + CO2. It participates in amine and polyamine biosynthesis; S-adenosylmethioninamine biosynthesis; S-adenosylmethioninamine from S-adenosyl-L-methionine: step 1/1. In terms of biological role, catalyzes the decarboxylation of S-adenosylmethionine to S-adenosylmethioninamine (dcAdoMet), the propylamine donor required for the synthesis of the polyamines spermine and spermidine from the diamine putrescine. The chain is S-adenosylmethionine decarboxylase proenzyme from Geobacillus thermodenitrificans (strain NG80-2).